The sequence spans 491 residues: Aspartyl/glutamyl-tRNA(Asn/Gln) amidotransferase subunit B (491 aa).

It belongs to the GatB/GatE family. GatB subfamily. In terms of assembly, heterotrimer of A, B and C subunits.

The enzyme catalyses L-glutamyl-tRNA(Gln) + L-glutamine + ATP + H2O = L-glutaminyl-tRNA(Gln) + L-glutamate + ADP + phosphate + H(+). The catalysed reaction is L-aspartyl-tRNA(Asn) + L-glutamine + ATP + H2O = L-asparaginyl-tRNA(Asn) + L-glutamate + ADP + phosphate + 2 H(+). Allows the formation of correctly charged Asn-tRNA(Asn) or Gln-tRNA(Gln) through the transamidation of misacylated Asp-tRNA(Asn) or Glu-tRNA(Gln) in organisms which lack either or both of asparaginyl-tRNA or glutaminyl-tRNA synthetases. The reaction takes place in the presence of glutamine and ATP through an activated phospho-Asp-tRNA(Asn) or phospho-Glu-tRNA(Gln). In Nostoc sp. (strain PCC 7120 / SAG 25.82 / UTEX 2576), this protein is Aspartyl/glutamyl-tRNA(Asn/Gln) amidotransferase subunit B.